We begin with the raw amino-acid sequence, 343 residues long: UDP-3-O-acylglucosamine N-acyltransferase 2 (343 aa).

His251 functions as the Proton acceptor in the catalytic mechanism.

This sequence belongs to the transferase hexapeptide repeat family. LpxD subfamily. As to quaternary structure, homotrimer.

The enzyme catalyses a UDP-3-O-[(3R)-3-hydroxyacyl]-alpha-D-glucosamine + a (3R)-hydroxyacyl-[ACP] = a UDP-2-N,3-O-bis[(3R)-3-hydroxyacyl]-alpha-D-glucosamine + holo-[ACP] + H(+). It functions in the pathway bacterial outer membrane biogenesis; LPS lipid A biosynthesis. Catalyzes the N-acylation of UDP-3-O-acylglucosamine using 3-hydroxyacyl-ACP as the acyl donor. Is involved in the biosynthesis of lipid A, a phosphorylated glycolipid that anchors the lipopolysaccharide to the outer membrane of the cell. The sequence is that of UDP-3-O-acylglucosamine N-acyltransferase 2 from Legionella pneumophila (strain Paris).